A 280-amino-acid polypeptide reads, in one-letter code: Protein HEAT-INDUCED TAS1 TARGET 4 (280 aa).

This sequence belongs to the heat induced plant HTT protein family. In terms of tissue distribution, expressed in seedlings, leaves, stems, inflorescences and siliques.

Its subcellular location is the cytoplasm. It localises to the nucleus. Functionally, mediates both basal and acquired thermotolerance. This is Protein HEAT-INDUCED TAS1 TARGET 4 from Arabidopsis thaliana (Mouse-ear cress).